A 356-amino-acid chain; its full sequence is UDP-3-O-acylglucosamine N-acyltransferase (356 aa).

Residue His-242 is the Proton acceptor of the active site.

Belongs to the transferase hexapeptide repeat family. LpxD subfamily. As to quaternary structure, homotrimer.

It carries out the reaction a UDP-3-O-[(3R)-3-hydroxyacyl]-alpha-D-glucosamine + a (3R)-hydroxyacyl-[ACP] = a UDP-2-N,3-O-bis[(3R)-3-hydroxyacyl]-alpha-D-glucosamine + holo-[ACP] + H(+). It participates in bacterial outer membrane biogenesis; LPS lipid A biosynthesis. In terms of biological role, catalyzes the N-acylation of UDP-3-O-acylglucosamine using 3-hydroxyacyl-ACP as the acyl donor. Is involved in the biosynthesis of lipid A, a phosphorylated glycolipid that anchors the lipopolysaccharide to the outer membrane of the cell. The chain is UDP-3-O-acylglucosamine N-acyltransferase from Acinetobacter baumannii (strain AB0057).